We begin with the raw amino-acid sequence, 1464 residues long: Nuclear pore complex protein NUP155 (1464 aa).

N-acetylserine is present on Ser-2.

It belongs to the non-repetitive/WGA-negative nucleoporin family. Part of the nuclear pore complex (NPC). The NPC has an eight-fold symmetrical structure comprising a central transport channel and two rings, the cytoplasmic and nuclear rings, to which eight filaments are attached. The cytoplasmic filaments have loose ends, while the nuclear filaments are joined in a distal ring, forming a nuclear basket. NPCs are highly dynamic in configuration and composition, and can be devided in 3 subcomplexes, the NUP62 subcomplex, the NUP107-160 subcomplex and the NUP93 subcomplex, containing approximately 30 different nucleoporin proteins.

The protein resides in the nucleus. The protein localises to the nuclear pore complex. In terms of biological role, major component of the nuclear pore complex (NPC). This is Nuclear pore complex protein NUP155 from Arabidopsis thaliana (Mouse-ear cress).